Reading from the N-terminus, the 475-residue chain is BTB/POZ domain-containing protein 10 (475 aa).

Positions 1 to 144 (MAGRPHPYDS…SQSSSDGSCK (144 aa)) are disordered. The span at 22–31 (LHSRPRKLYK) shows a compositional bias: basic residues. Basic and acidic residues predominate over residues 57-80 (GHERSRDRRRSSDRSRDSSHERAE). The segment covering 81–94 (SQLTPCIRNVTSPT) has biased composition (polar residues). Basic and acidic residues predominate over residues 97–107 (HHIEREKDHSS). The segment covering 108 to 144 (SRPSSPRPQRASPNGSMSSAGNSSRNSSQSSSDGSCK) has biased composition (low complexity). Positions 146–475 (SGEMVFVYEN…LDPDAQNPML (330 aa)) are interaction with AKT family members. The BTB domain occupies 167 to 241 (ERVTLIVDNT…YKTGIIRCPD (75 aa)). Residues 451 to 475 (ELDILPSHPASGNNDLDPDAQNPML) are disordered.

In terms of assembly, interacts (via C-terminal 330-amino-acid region) with AKT1; AKT2 and AKT3. Interacts with PPP2CA and PPP1CA. As to expression, ubiquitously expressed (at protein level).

It localises to the nucleus. It is found in the cytoplasm. Its function is as follows. Plays a major role as an activator of AKT family members by inhibiting PPP2CA-mediated dephosphorylation, thereby keeping AKTs activated. Plays a role in preventing motor neuronal death and in accelerating the growth of pancreatic beta cells. The protein is BTB/POZ domain-containing protein 10 (Btbd10) of Mus musculus (Mouse).